The sequence spans 473 residues: Tryptophanase (473 aa).

Lysine 270 is modified (N6-(pyridoxal phosphate)lysine).

The protein belongs to the beta-eliminating lyase family. In terms of assembly, homotetramer. The cofactor is pyridoxal 5'-phosphate.

The enzyme catalyses L-tryptophan + H2O = indole + pyruvate + NH4(+). The protein operates within amino-acid degradation; L-tryptophan degradation via pyruvate pathway; indole and pyruvate from L-tryptophan: step 1/1. The polypeptide is Tryptophanase (Vibrio vulnificus (strain CMCP6)).